We begin with the raw amino-acid sequence, 305 residues long: Heme A synthase (305 aa).

Topologically, residues methionine 1–lysine 6 are cytoplasmic. The chain crosses the membrane as a helical span at residues valine 7–threonine 27. Residues lysine 28 to arginine 63 are Extracellular-facing. Residues cysteine 35 and cysteine 42 are joined by a disulfide bond. The active site involves glutamate 59. A heme o-binding site is contributed by histidine 62. The helical transmembrane segment at methionine 64–methionine 84 threads the bilayer. The Cytoplasmic segment spans residues lysine 85–proline 92. The helical transmembrane segment at leucine 93–valine 113 threads the bilayer. The Extracellular portion of the chain corresponds to tryptophan 114 to alanine 122. The helical transmembrane segment at leucine 123–phenylalanine 143 threads the bilayer. Histidine 124 provides a ligand contact to heme o. At glutamate 144–leucine 160 the chain is on the cytoplasmic side. A helical transmembrane segment spans residues arginine 161–valine 181. Residues arginine 182–tyrosine 212 are Extracellular-facing. Residues phenylalanine 213–phenylalanine 233 form a helical membrane-spanning segment. Residue histidine 214 participates in heme b binding. The Cytoplasmic segment spans residues arginine 234–arginine 240. Residues valine 241 to alanine 261 traverse the membrane as a helical segment. Topologically, residues leucine 262 to tyrosine 271 are extracellular. Residues isoleucine 272–leucine 292 form a helical membrane-spanning segment. Position 276 (histidine 276) interacts with heme b. Residues leucine 293–lysine 305 lie on the Cytoplasmic side of the membrane.

Belongs to the COX15/CtaA family. Type 1 subfamily. Interacts with CtaB. The cofactor is heme b.

Its subcellular location is the cell membrane. It carries out the reaction Fe(II)-heme o + 2 A + H2O = Fe(II)-heme a + 2 AH2. The protein operates within porphyrin-containing compound metabolism; heme A biosynthesis; heme A from heme O: step 1/1. Catalyzes the conversion of heme O to heme A by two successive hydroxylations of the methyl group at C8. The first hydroxylation forms heme I, the second hydroxylation results in an unstable dihydroxymethyl group, which spontaneously dehydrates, resulting in the formyl group of heme A. This Listeria monocytogenes serovar 1/2a (strain ATCC BAA-679 / EGD-e) protein is Heme A synthase.